The following is a 673-amino-acid chain: UvrABC system protein B (673 aa).

The Helicase ATP-binding domain occupies 26 to 414 (EGLEDGLAHQ…GGDVVDQVVR (389 aa)). 39-46 (GVTGSGKT) is an ATP binding site. Positions 92-115 (YYDYYQPEAYVPSSDTFIEKDASV) match the Beta-hairpin motif. The Helicase C-terminal domain occupies 431–597 (QVDDLLSEIR…GLNKKVVDIL (167 aa)). One can recognise a UVR domain in the interval 633-668 (QQKIHELEGLMMQHAQNLEFEEAAQIRDQLHQLREL).

This sequence belongs to the UvrB family. As to quaternary structure, forms a heterotetramer with UvrA during the search for lesions. Interacts with UvrC in an incision complex.

Its subcellular location is the cytoplasm. Its function is as follows. The UvrABC repair system catalyzes the recognition and processing of DNA lesions. A damage recognition complex composed of 2 UvrA and 2 UvrB subunits scans DNA for abnormalities. Upon binding of the UvrA(2)B(2) complex to a putative damaged site, the DNA wraps around one UvrB monomer. DNA wrap is dependent on ATP binding by UvrB and probably causes local melting of the DNA helix, facilitating insertion of UvrB beta-hairpin between the DNA strands. Then UvrB probes one DNA strand for the presence of a lesion. If a lesion is found the UvrA subunits dissociate and the UvrB-DNA preincision complex is formed. This complex is subsequently bound by UvrC and the second UvrB is released. If no lesion is found, the DNA wraps around the other UvrB subunit that will check the other stand for damage. The chain is UvrABC system protein B from Shigella flexneri.